The chain runs to 377 residues: All-trans-retinol dehydrogenase [NAD(+)] ADH4 (377 aa).

Residue C47 coordinates Zn(2+). T49 lines the NAD(+) pocket. Residues H68, C98, C101, C104, C112, and C179 each coordinate Zn(2+). NAD(+) contacts are provided by residues 204–209 (GLGCVG), D228, K233, 297–299 (VGA), 320–322 (TFF), and R372.

This sequence belongs to the zinc-containing alcohol dehydrogenase family. Class-II subfamily. As to quaternary structure, dimer. The cofactor is Zn(2+). Liver specific.

It is found in the cytoplasm. The catalysed reaction is all-trans-retinol + NAD(+) = all-trans-retinal + NADH + H(+). The enzyme catalyses 9-cis-retinol + NAD(+) = 9-cis-retinal + NADH + H(+). It catalyses the reaction 20-hydroxy-(5Z,8Z,11Z,14Z)-eicosatetraenoate + NAD(+) = 20-oxo-(5Z,8Z,11Z,14Z)-eicosatetraenoate + NADH + H(+). It carries out the reaction 20-oxo-(5Z,8Z,11Z,14Z)-eicosatetraenoate + NAD(+) + H2O = (5Z,8Z,11Z,14Z)-eicosatetraenedioate + NADH + 2 H(+). The catalysed reaction is 1,4-benzoquinone + NADH + H(+) = hydroquinone + NAD(+). Its activity is regulated as follows. Oxidation of 20-HETE is inhibited by low concentrations of N-heptylformamide. Oxidation of 20-HETE is a decreased by 55-65% by either all-trans-retinol or all-trans-retinoic acid. Strongly inhibited by omega-hydroxy fatty acids. Its function is as follows. Catalyzes the NAD-dependent oxidation of either all-trans-retinol or 9-cis-retinol. Also oxidizes long chain omega-hydroxy fatty acids, such as 20-HETE, producing both the intermediate aldehyde, 20-oxoarachidonate and the end product, a dicarboxylic acid, (5Z,8Z,11Z,14Z)-eicosatetraenedioate. Also catalyzes the reduction of benzoquinones. This is All-trans-retinol dehydrogenase [NAD(+)] ADH4 from Mus musculus (Mouse).